Consider the following 89-residue polypeptide: ATP synthase subunit c, sodium ion specific (89 aa).

2 consecutive transmembrane segments (helical) span residues 9–29 and 68–88; these read VVLA…IGPG and GIYS…VGLL.

The protein belongs to the ATPase C chain family. As to quaternary structure, F-type ATPases have 2 components, F(1) - the catalytic core - and F(0) - the membrane sodium channel. F(1) has five subunits: alpha(3), beta(3), gamma(1), delta(1), epsilon(1). F(0) has three main subunits: a(1), b(2) and c(10-14). The alpha and beta chains form an alternating ring which encloses part of the gamma chain. F(1) is attached to F(0) by a central stalk formed by the gamma and epsilon chains, while a peripheral stalk is formed by the delta and b chains.

It is found in the cell membrane. Its function is as follows. F(1)F(0) ATP synthase produces ATP from ADP in the presence of a proton or sodium gradient. F-type ATPases consist of two structural domains, F(1) containing the extramembraneous catalytic core and F(0) containing the membrane sodium channel, linked together by a central stalk and a peripheral stalk. During catalysis, ATP synthesis in the catalytic domain of F(1) is coupled via a rotary mechanism of the central stalk subunits to sodium translocation. In terms of biological role, key component of the F(0) channel; it plays a direct role in translocation across the membrane. A homomeric c-ring of between 10-14 subunits forms the central stalk rotor element with the F(1) delta and epsilon subunits. This Propionigenium modestum protein is ATP synthase subunit c, sodium ion specific (atpE).